The sequence spans 203 residues: Signal peptidase I (203 aa).

The segment at 1–26 is disordered; sequence MSSESDSPTPQTPPAQPAASQPKADS. Residues 1–33 are Cytoplasmic-facing; sequence MSSESDSPTPQTPPAQPAASQPKADSPLMEGIK. The segment covering 17 to 26 has biased composition (low complexity); it reads PAASQPKADS. The helical transmembrane segment at 34 to 50 threads the bilayer; the sequence is TIGLSVVLALGIRTFVA. At 51–203 the chain is on the extracellular side; the sequence is EARYIPSESM…LGELGPPPSY (153 aa). Catalysis depends on residues serine 59 and lysine 109.

It belongs to the peptidase S26 family.

The protein localises to the cell membrane. The catalysed reaction is Cleavage of hydrophobic, N-terminal signal or leader sequences from secreted and periplasmic proteins.. The chain is Signal peptidase I (lepB) from Leptolyngbya laminosa (Phormidium laminosum).